Here is a 951-residue protein sequence, read N- to C-terminus: Valine--tRNA ligase (951 aa).

Positions 42–52 (PNVTGSLHMGH) match the 'HIGH' region motif. Positions 554-558 (KMSKS) match the 'KMSKS' region motif. Position 557 (Lys-557) interacts with ATP. A coiled-coil region spans residues 882–944 (LINKDDELAR…AEAKAKLIEQ (63 aa)).

It belongs to the class-I aminoacyl-tRNA synthetase family. ValS type 1 subfamily. Monomer.

It localises to the cytoplasm. The catalysed reaction is tRNA(Val) + L-valine + ATP = L-valyl-tRNA(Val) + AMP + diphosphate. In terms of biological role, catalyzes the attachment of valine to tRNA(Val). As ValRS can inadvertently accommodate and process structurally similar amino acids such as threonine, to avoid such errors, it has a 'posttransfer' editing activity that hydrolyzes mischarged Thr-tRNA(Val) in a tRNA-dependent manner. The chain is Valine--tRNA ligase from Salmonella choleraesuis (strain SC-B67).